A 341-amino-acid polypeptide reads, in one-letter code: MLADAAPLDSIRHLIGKMPPASERAAAAARARQAELTKPQGSLGRLEEIAAFLASWQGKPSPTLDRPLVAVFAANHGVVAKGVSAYPPSVTRAMMQNFSAGGAAINQICGAFGVGLKVFELALDIPTKDITEEPAMEAAETAATFAFGMEAIDGGVDLLCVGEMGIGNTTVAAAIFYALYGGSAADWVGRGAGVEGEALARKMAAVETAVALHRPFLSDPLEVMRRLGGREIAAMAGAIVAARMQNIPVVLDGYVVCAAAAILHAVDKSALDHCLAGHLSAEGAHGEVLRRLGKIPLLDLGMRLGEGSGAALAVGLIKAAVACHTGMATFAEAQVAGKVGG.

Glutamate 306 (proton acceptor) is an active-site residue.

Belongs to the CobT family.

It catalyses the reaction 5,6-dimethylbenzimidazole + nicotinate beta-D-ribonucleotide = alpha-ribazole 5'-phosphate + nicotinate + H(+). Its pathway is nucleoside biosynthesis; alpha-ribazole biosynthesis; alpha-ribazole from 5,6-dimethylbenzimidazole: step 1/2. Catalyzes the synthesis of alpha-ribazole-5'-phosphate from nicotinate mononucleotide (NAMN) and 5,6-dimethylbenzimidazole (DMB). This is Nicotinate-nucleotide--dimethylbenzimidazole phosphoribosyltransferase from Methylocella silvestris (strain DSM 15510 / CIP 108128 / LMG 27833 / NCIMB 13906 / BL2).